A 337-amino-acid chain; its full sequence is GDP-mannose transporter 1 (337 aa).

Topologically, residues 1 to 16 (MSELKTGHAGHNPWAS) are cytoplasmic. Residues 17 to 37 (VANSGPISILSYCGSSILMTV) form a helical membrane-spanning segment. The Lumenal segment spans residues 38–51 (TNKFVVNLKDFNMN). The chain crosses the membrane as a helical span at residues 52-72 (FVMLFVQSLVCTITLIILRIL). Residues 73–92 (GYAKFRSLNKTDAKNWFPIS) are Cytoplasmic-facing. Residues 93-113 (FLLVLMIYTSSKALQYLAVPI) traverse the membrane as a helical segment. At 114-119 (YTIFKN) the chain is on the lumenal side. N-linked (GlcNAc...) asparagine glycosylation is present at N119. Residues 120–140 (LTIILIAYGEVLFFGGSVTSM) traverse the membrane as a helical segment. The Cytoplasmic portion of the chain corresponds to 141–144 (ELSS). A helical membrane pass occupies residues 145–165 (FLLMVLSSVVATWGDQQAVAA). At 166–180 (KAASLAEGAAGAVAS) the chain is on the lumenal side. A helical membrane pass occupies residues 181-201 (FNPGYFWMFTNCITSALFVLI). Residues 202–215 (MRKRIKLTNFKDFD) lie on the Cytoplasmic side of the membrane. The chain crosses the membrane as a helical span at residues 216–236 (TMFYNNVLALPILLLFSFCVE). Residues 237 to 252 (DWSSVNLTNNFSNDSL) are Lumenal-facing. N-linked (GlcNAc...) asparagine glycans are attached at residues N242, N246, and N249. A helical membrane pass occupies residues 253–273 (TAMIISGVASVGISYCSGWCV). At 274 to 279 (RVTSST) the chain is on the cytoplasmic side. Residues 280–300 (TYSMVGALNKLPIALSGLIFF) traverse the membrane as a helical segment. The Lumenal segment spans residues 301–304 (DAPR). Residues 305–325 (NFLSILSIFIGFLSGIIYAVA) form a helical membrane-spanning segment. Residues 326-337 (KQKKQQAQPLRK) lie on the Cytoplasmic side of the membrane.

The protein belongs to the TPT transporter family. SLC35D subfamily. Homooligomer.

The protein resides in the golgi apparatus membrane. The protein localises to the cytoplasmic vesicle membrane. It is found in the endoplasmic reticulum membrane. Its function is as follows. Involved in the import of GDP-mannose from the cytoplasm into the Golgi lumen. Defective copy causes severe glycosylation defect and abnormal retention of soluble endoplasmic reticulum proteins. Involved in vanadate sensitivity. This Saccharomyces cerevisiae (strain YJM789) (Baker's yeast) protein is GDP-mannose transporter 1 (VRG4).